A 1142-amino-acid chain; its full sequence is MKDDKGRSDTVNGYYISNSKLSSGFYKRNNANTASNDEKPNLEQNDIPSVTSSGSSTPSSISIEKEIKISKGNVIVKAIRSWSLYVAIIAILLLLVILHSFQGRPQDNGCGKSYVWPSYVRFVDFDERYTRFANKYSLYLYREKSVEESDEPSGIPILFIPGNAGSYKQVRAFAAQAAHVYANAYAEDADGTLNAGKLVPDFFVVDFNEDFSAFHGQTLLDQAEYVNDAIPYILSLYRQNRKISSEYDNEAFPPPTSVILLGHSMGGIVAQATFTMKNYVDGSVNTLITLATPHAMAPLPFDRHLVEFYESIKNFWSQSFLLSPEENSLDDVLLVSIAGGGLDTHVVPEYSSISTFVPPSNGLMVFTSGIPSVWAEIDHQAMAWCENFRRVLIRGIFAIMDARTSKCTVSLNLRKELLSRAYIQGSSFQNDITQISKPIAQYKALDLDLTYVYSEMPGQLLFLNQLGVSYIRHHIFPIPKPTSSIDRFELLTDQPIDLSSSNIKVLACRLDPKIDNTISALLENGNNKVINANCHLLRELVTLLPASTAYTSSPYGGDSFYNYVLPKEKMDDYHFILVSDDSKAPASGFVVGGFSNVSLDPKTIKGSQIELFKSGRKFQFDTKGSISKRFRFPGIQSSIMAYTISVTYELYPGAVPQKEFTPMLKQSIESPFETKYHVNMSNTELSVHGISPFMEFFGKESEKSLTLEFFLNPAIYKSVYVSIQPSYYRSAGRLLMRYRTLLASFPVVVISLAAYNQFRYFHYGSAYLSMSAALEVMIRKGLIKLLFLVSILSIAFSYLISRVELIVADGADPVASWKIFAMMVPKSFWKQNHLLFGLQTAQFWFLAPLLTLMFVGLVITASVIILCVMHLLAFIYGIYLRYKGLTFTGVCQAVKFSFQCLRTRNTRKLDHGEFKKLSSFLSQRNMYYANPSLCYVYGKKHMQARIIGIMLLLLMAMTVVPFQLVYGVALCTQTVTTAKALHLARFCTKSSHYRKKLWDFYNFSCTITILMLLLAPLDFPVLIVWARNLSMHWSIPFPTHHNFFSIIPFILLTEILRTGKMLPRLNDVEYYINNVFLFLLSFYSLIYGAEKPYLIHNVVGLYFFWLLFLYAKNGFFVQNISKWPIIPRMKYFIKHKFLRSIS.

A disordered region spans residues 24 to 59 (GFYKRNNANTASNDEKPNLEQNDIPSVTSSGSSTPS). The span at 47 to 59 (IPSVTSSGSSTPS) shows a compositional bias: low complexity. The chain crosses the membrane as a helical span at residues 81 to 101 (SWSLYVAIIAILLLLVILHSF). Residue Ser264 is part of the active site. 2 N-linked (GlcNAc...) asparagine glycosylation sites follow: Asn596 and Asn679. 4 helical membrane-spanning segments follow: residues 741–761 (LLAS…FRYF), 781–801 (GLIK…YLIS), 849–869 (LLTL…LCVM), and 946–966 (IIGI…QLVY). Asn1002 carries an N-linked (GlcNAc...) asparagine glycan. The chain crosses the membrane as a helical span at residues 1006–1026 (TITILMLLLAPLDFPVLIVWA). The N-linked (GlcNAc...) asparagine glycan is linked to Asn1028. A run of 3 helical transmembrane segments spans residues 1035-1055 (IPFP…LTEI), 1075-1095 (VFLF…PYLI), and 1097-1117 (NVVG…GFFV). An N-linked (GlcNAc...) asparagine glycan is attached at Asn1119.

It belongs to the GPI inositol-deacylase family.

The protein localises to the endoplasmic reticulum membrane. Functionally, involved in inositol deacylation of GPI-anchored proteins which plays important roles in the quality control and ER-associated degradation of GPI-anchored proteins. The chain is GPI inositol-deacylase (bst1) from Schizosaccharomyces pombe (strain 972 / ATCC 24843) (Fission yeast).